We begin with the raw amino-acid sequence, 115 residues long: T cell receptor beta variable 11-2 (115 aa).

The signal sequence occupies residues 1-21 (MGTRLLCWAALCLLGAELTEA). The Ig-like domain maps to 22–115 (GVAQSPRYKI…SAVYLCASSL (94 aa)). A disulfide bridge connects residues C42 and C111.

As to quaternary structure, alpha-beta TR is a heterodimer composed of an alpha and beta chain; disulfide-linked. The alpha-beta TR is associated with the transmembrane signaling CD3 coreceptor proteins to form the TR-CD3 (TcR or TCR). The assembly of alpha-beta TR heterodimers with CD3 occurs in the endoplasmic reticulum where a single alpha-beta TR heterodimer associates with one CD3D-CD3E heterodimer, one CD3G-CD3E heterodimer and one CD247 homodimer forming a stable octameric structure. CD3D-CD3E and CD3G-CD3E heterodimers preferentially associate with TR alpha and TR beta chains, respectively. The association of the CD247 homodimer is the last step of TcR assembly in the endoplasmic reticulum and is required for transport to the cell surface.

It is found in the cell membrane. Functionally, v region of the variable domain of T cell receptor (TR) beta chain that participates in the antigen recognition. Alpha-beta T cell receptors are antigen specific receptors which are essential to the immune response and are present on the cell surface of T lymphocytes. Recognize peptide-major histocompatibility (MH) (pMH) complexes that are displayed by antigen presenting cells (APC), a prerequisite for efficient T cell adaptive immunity against pathogens. Binding of alpha-beta TR to pMH complex initiates TR-CD3 clustering on the cell surface and intracellular activation of LCK that phosphorylates the ITAM motifs of CD3G, CD3D, CD3E and CD247 enabling the recruitment of ZAP70. In turn ZAP70 phosphorylates LAT, which recruits numerous signaling molecules to form the LAT signalosome. The LAT signalosome propagates signal branching to three major signaling pathways, the calcium, the mitogen-activated protein kinase (MAPK) kinase and the nuclear factor NF-kappa-B (NF-kB) pathways, leading to the mobilization of transcription factors that are critical for gene expression and essential for T cell growth and differentiation. The T cell repertoire is generated in the thymus, by V-(D)-J rearrangement. This repertoire is then shaped by intrathymic selection events to generate a peripheral T cell pool of self-MH restricted, non-autoaggressive T cells. Post-thymic interaction of alpha-beta TR with the pMH complexes shapes TR structural and functional avidity. The protein is T cell receptor beta variable 11-2 of Homo sapiens (Human).